A 354-amino-acid chain; its full sequence is MAPQNKVTTSGKDNNMDKQKALEAALAQIDRAFGKGSVMRLGSREKIEIDTISSGSLGLDIALGIGGLPRGRIVEIYGPESSGKTTLALHAIAEAQKAGGTAAFVDAEHALDPVYAKKLGVNTDDLIVSQPDTGEQALEITDTLIRSNAVDILVVDSVAALTPRAEIEGEMGDSHVGLQARLMSQALRKITGSINRSQTLVIFINQVRMKIGVMYGNPETTTGGNALKFYASVRLDIRRVGQIKDRDEIVGNATRVKVVKNKLAPPFKQVEFDIMYGEGVSKMGEILDLGVKAGIIDKSGSWFSHDSVRIGQGRENAKTFLREHPEMTEKIEKMIRHNTAEIADEMLDPSIPED.

78–85 (GPESSGKT) is an ATP binding site.

Belongs to the RecA family.

The protein localises to the cytoplasm. Functionally, can catalyze the hydrolysis of ATP in the presence of single-stranded DNA, the ATP-dependent uptake of single-stranded DNA by duplex DNA, and the ATP-dependent hybridization of homologous single-stranded DNAs. It interacts with LexA causing its activation and leading to its autocatalytic cleavage. The chain is Protein RecA from Zymomonas mobilis subsp. mobilis (strain ATCC 31821 / ZM4 / CP4).